Here is a 144-residue protein sequence, read N- to C-terminus: Large ribosomal subunit protein uL14 (144 aa).

This sequence belongs to the universal ribosomal protein uL14 family. As to quaternary structure, part of the 50S ribosomal subunit. Forms a cluster with proteins L3 and L24e, part of which may contact the 16S rRNA in 2 intersubunit bridges.

In terms of biological role, binds to 23S rRNA. Forms part of two intersubunit bridges in the 70S ribosome. The sequence is that of Large ribosomal subunit protein uL14 from Caldivirga maquilingensis (strain ATCC 700844 / DSM 13496 / JCM 10307 / IC-167).